Reading from the N-terminus, the 201-residue chain is NADH-quinone oxidoreductase subunit B 1 (201 aa).

[4Fe-4S] cluster-binding residues include Cys-80, Cys-81, Cys-145, and Cys-175.

It belongs to the complex I 20 kDa subunit family. NDH-1 is composed of 14 different subunits. Subunits NuoB, C, D, E, F, and G constitute the peripheral sector of the complex. Requires [4Fe-4S] cluster as cofactor.

The protein localises to the cell inner membrane. The catalysed reaction is a quinone + NADH + 5 H(+)(in) = a quinol + NAD(+) + 4 H(+)(out). Functionally, NDH-1 shuttles electrons from NADH, via FMN and iron-sulfur (Fe-S) centers, to quinones in the respiratory chain. The immediate electron acceptor for the enzyme in this species is believed to be ubiquinone. Couples the redox reaction to proton translocation (for every two electrons transferred, four hydrogen ions are translocated across the cytoplasmic membrane), and thus conserves the redox energy in a proton gradient. The protein is NADH-quinone oxidoreductase subunit B 1 of Rhodopseudomonas palustris (strain BisB18).